A 346-amino-acid chain; its full sequence is Uroporphyrinogen decarboxylase (346 aa).

Substrate-binding positions include 23–27 (RQAGR), D72, Y149, T204, and H318.

It belongs to the uroporphyrinogen decarboxylase family. In terms of assembly, homodimer.

It localises to the cytoplasm. The enzyme catalyses uroporphyrinogen III + 4 H(+) = coproporphyrinogen III + 4 CO2. It participates in porphyrin-containing compound metabolism; protoporphyrin-IX biosynthesis; coproporphyrinogen-III from 5-aminolevulinate: step 4/4. Its function is as follows. Catalyzes the decarboxylation of four acetate groups of uroporphyrinogen-III to yield coproporphyrinogen-III. This Synechococcus sp. (strain JA-2-3B'a(2-13)) (Cyanobacteria bacterium Yellowstone B-Prime) protein is Uroporphyrinogen decarboxylase.